Here is a 130-residue protein sequence, read N- to C-terminus: Protein ApaG (130 aa).

An ApaG domain is found at 3-127 (RALTRDIEVT…FSLDSPGLVR (125 aa)).

This chain is Protein ApaG, found in Rhizobium meliloti (strain 1021) (Ensifer meliloti).